We begin with the raw amino-acid sequence, 242 residues long: Zinc finger protein ZOP1 (242 aa).

The Matrin-type zinc-finger motif lies at 11-42 (KWCEFCKIWIQNNPTSIRNHDLGKRHRECVDK). Residues 42-71 (KKLTDMRERSAAKDKELKKNEKLLQQIEAK) adopt a coiled-coil conformation. The segment at 154 to 242 (VKKPVSSSGA…PLLGLYNRPF (89 aa)) is disordered. The span at 155–172 (KKPVSSSGAGPSVGKPPG) shows a compositional bias: low complexity. Residues 201–233 (RQDEKPKKVSAEEKAALKAREAARKRVEDREKP) show a composition bias toward basic and acidic residues.

In terms of assembly, component of a pre-mRNA splicing complex. Interacts with STA1. Interacts with PRP31.

It is found in the nucleus. Its subcellular location is the cajal body. In terms of biological role, nucleic acid-binding protein that promotes Pol IV-dependent small interfering RNA (siRNA) accumulation, DNA methylation and transcriptional silencing. May possess both RNA-directed DNA methylation (RdDM)-dependent and -independent roles in transcriptional silencing. Acts as a pre-mRNA splicing factor that associates with several typical components of the splicing machinery as well as with Pol II. The sequence is that of Zinc finger protein ZOP1 from Arabidopsis thaliana (Mouse-ear cress).